The following is a 1357-amino-acid chain: DNA-directed RNA polymerase subunit beta (1357 aa).

Belongs to the RNA polymerase beta chain family. The RNAP catalytic core consists of 2 alpha, 1 beta, 1 beta' and 1 omega subunit. When a sigma factor is associated with the core the holoenzyme is formed, which can initiate transcription.

It carries out the reaction RNA(n) + a ribonucleoside 5'-triphosphate = RNA(n+1) + diphosphate. In terms of biological role, DNA-dependent RNA polymerase catalyzes the transcription of DNA into RNA using the four ribonucleoside triphosphates as substrates. The sequence is that of DNA-directed RNA polymerase subunit beta from Acinetobacter baumannii (strain ATCC 17978 / DSM 105126 / CIP 53.77 / LMG 1025 / NCDC KC755 / 5377).